A 757-amino-acid chain; its full sequence is Inhibitor of nuclear factor kappa-B kinase subunit beta (757 aa).

Residues 15–300 enclose the Protein kinase domain; that stretch reads WEMKERLGTG…DPQYGPNGCF (286 aa). ATP is bound by residues 21–29 and Lys44; that span reads LGTGGFGNV. The active-site Proton acceptor is Asp145. Lys163 is covalently cross-linked (Glycyl lysine isopeptide (Lys-Gly) (interchain with G-Cter in ubiquitin)). Ser177 is subject to Phosphoserine; by TBK1 and PKC/PRKCZ. Position 179 is an S-nitrosocysteine (Cys179). Position 181 is a phosphoserine; by TBK1, PKC/PRKCZ and PDPK1 (Ser181). Pro191 bears the Hydroxyproline mark. Residues 458–479 form a leucine-zipper region; sequence LLRNNSCLSKMKNAMASTAQQL. Ser670 bears the Phosphoserine; by autocatalysis mark. A Phosphoserine modification is found at Ser672. A phosphoserine; by autocatalysis mark is found at Ser675, Ser682, Ser689, Ser692, Ser697, Ser705, Ser733, and Ser740. Positions 683-703 are disordered; sequence HPGQLMSQPSSACDSLPESDK. Residues 737–742 are NEMO-binding; it reads LDWSWL.

This sequence belongs to the protein kinase superfamily. Ser/Thr protein kinase family. I-kappa-B kinase subfamily. As to quaternary structure, component of the I-kappa-B-kinase (IKK) core complex consisting of CHUK, IKBKB and IKBKG; probably four alpha/CHUK-beta/IKBKB dimers are associated with four gamma/IKBKG subunits. The IKK core complex seems to associate with regulatory or adapter proteins to form a IKK-signalosome holo-complex. The IKK complex associates with TERF2IP/RAP1, leading to promote IKK-mediated phosphorylation of RELA/p65. Part of a complex composed of NCOA2, NCOA3, CHUK/IKKA, IKBKB, IKBKG and CREBBP. Part of a 70-90 kDa complex at least consisting of CHUK/IKKA, IKBKB, NFKBIA, RELA, ELP1 and MAP3K14. Found in a membrane raft complex, at least composed of BCL10, CARD11, DPP4 and IKBKB. Interacts with SQSTM1 through PRKCZ or PRKCI. Forms an NGF-induced complex with IKBKB, PRKCI and TRAF6. May interact with MAVS/IPS1. Interacts with NALP2. Interacts with TICAM1. Interacts with FAF1; the interaction disrupts the IKK complex formation. Interacts with ATM. Part of a ternary complex consisting of TANK, IKBKB and IKBKG. Interacts with NIBP; the interaction is direct. Interacts with ARRB1 and ARRB2. Interacts with TRIM21. Interacts with NLRC5; prevents IKBKB phosphorylation and kinase activity. Interacts with PDPK1. Interacts with EIF2AK2/PKR. The phosphorylated form interacts with PPM1A and PPM1B. Interacts with ZNF268 isoform 2; the interaction is further increased in a TNF-alpha-dependent manner. Interacts with IKBKE. Interacts with ZC3H12A. Interacts with AKAP13. Interacts with LRRC14; disrupts IKBKB-IKBKG interaction preventing I-kappa-B-kinase (IKK) core complex formation and leading to a decrease of IKBKB phosphorylation and NF-kappaB activation. Interacts with SASH1. Interacts with ARFIP2. Interacts with FKBP5. Interacts with kinase TBK1; the complex interacts with STAT1, leading to phosphorylation of STAT1 on 'Thr-748' by IKBKB. Post-translationally, upon cytokine stimulation, phosphorylated on Ser-177 and Ser-181 by MEKK1 and/or MAP3K14/NIK as well as TBK1 and PRKCZ; which enhances activity. Phosphorylated by MAP3K7/TAK1 in response to NOD1 and NOD2 signaling, promoting activation and phosphorylation of NF-kappa-B inhibitors, leading to NF-kappa-B activation. Once activated, autophosphorylates on the C-terminal serine cluster; which decreases activity and prevents prolonged activation of the inflammatory response. Phosphorylated by the IKK-related kinases TBK1 and IKBKE, which is associated with reduced CHUK/IKKA and IKBKB activity and NF-kappa-B-dependent gene transcription. Dephosphorylated at Ser-177 and Ser-181 by PPM1A and PPM1B. In terms of processing, ubiquitinated. Monoubiquitination involves TRIM21 that leads to inhibition of Tax-induced NF-kappa-B signaling. 'Ser-163' may not serve as a monoubiquitination site. Ubiquitination on 'Ser-163' may modulate phosphorylation on C-terminal serine residues. Hydroxylated by PHD1/EGLN2, loss of hydroxylation under hypoxic conditions results in activation of NF-kappa-B. As to expression, detected in heart (at protein level). Expressed in liver, kidney and spleen.

It localises to the cytoplasm. The protein localises to the nucleus. It is found in the membrane raft. It carries out the reaction L-seryl-[I-kappa-B protein] + ATP = O-phospho-L-seryl-[I-kappa-B protein] + ADP + H(+). It catalyses the reaction L-seryl-[protein] + ATP = O-phospho-L-seryl-[protein] + ADP + H(+). The enzyme catalyses L-threonyl-[protein] + ATP = O-phospho-L-threonyl-[protein] + ADP + H(+). Functionally, serine kinase that plays an essential role in the NF-kappa-B signaling pathway which is activated by multiple stimuli such as inflammatory cytokines, bacterial or viral products, DNA damages or other cellular stresses. Acts as a part of the canonical IKK complex in the conventional pathway of NF-kappa-B activation. Phosphorylates inhibitors of NF-kappa-B on 2 critical serine residues. These modifications allow polyubiquitination of the inhibitors and subsequent degradation by the proteasome. In turn, free NF-kappa-B is translocated into the nucleus and activates the transcription of hundreds of genes involved in immune response, growth control, or protection against apoptosis. In addition to the NF-kappa-B inhibitors, phosphorylates several other components of the signaling pathway including NEMO/IKBKG, NF-kappa-B subunits RELA and NFKB1, as well as IKK-related kinases TBK1 and IKBKE. IKK-related kinase phosphorylations may prevent the overproduction of inflammatory mediators since they exert a negative regulation on canonical IKKs. Phosphorylates FOXO3, mediating the TNF-dependent inactivation of this pro-apoptotic transcription factor. Also phosphorylates other substrates including NAA10, NCOA3, BCL10 and IRS1. Phosphorylates RIPK1 at 'Ser-25' which represses its kinase activity and consequently prevents TNF-mediated RIPK1-dependent cell death. Phosphorylates the C-terminus of IRF5, stimulating IRF5 homodimerization and translocation into the nucleus. Following bacterial lipopolysaccharide (LPS)-induced TLR4 endocytosis, phosphorylates STAT1 at 'Thr-748' which restricts interferon signaling and anti-inflammatory responses and promotes innate inflammatory responses. IKBKB-mediated phosphorylation of STAT1 at 'Thr-748' promotes binding of STAT1 to the ARID5A promoter, resulting in transcriptional activation of ARID5A and subsequent ARID5A-mediated stabilization of IL6. It also promotes binding of STAT1 to the IL12B promoter and activation of IL12B transcription. This Mus musculus (Mouse) protein is Inhibitor of nuclear factor kappa-B kinase subunit beta (Ikbkb).